A 374-amino-acid polypeptide reads, in one-letter code: Phenoloxidase-activating enzyme 1 (374 aa).

The signal sequence occupies residues 1 to 19; the sequence is MWKSLVFFVSALIWSFGSS. The propeptide at 20-120 is activation peptide; that stretch reads QDCTTPTGSR…QCGIDTTGDR (101 aa). A Clip domain is found at 21–74; it reads DCTTPTGSRSNCVSLYQCQPLYNAFEQRPLPTHVVSYLGRSQCGFEGYVPRVCC. 3 cysteine pairs are disulfide-bonded: Cys22–Cys73, Cys32–Cys63, and Cys38–Cys74. The span at 83–97 shows a compositional bias: polar residues; it reads ATSARPTQAPTQGSS. A disordered region spans residues 83-114; it reads ATSARPTQAPTQGSSDVFPEDSSPAPRNQCGI. The region spanning 121-370 is the Peptidase S1 domain; sequence VYGGTITDLD…YIDWIQNTIA (250 aa). A disulfide bond links Cys151 and Cys167. The active-site Charge relay system is the His166. The Ca(2+) site is built by Glu186 and Asp194. Asp228 acts as the Charge relay system in catalysis. 2 disulfide bridges follow: Cys292–Cys307 and Cys317–Cys346. The active-site Charge relay system is the Ser321.

The protein belongs to the peptidase S1 family. CLIP subfamily. In terms of processing, activated by the removal of the N-terminal inhibitory propeptide. As to expression, expressed in hemocytes.

Its subcellular location is the secreted. Its activity is regulated as follows. Inhibited by aprotenin. Not inhibited by EDTA, PMSF or leupeptin. Serine protease which, by cleaving and activating prophenoloxidase (PPO1) after immune challenge, plays an essential role in the melanization immune response to wounding. This Spodoptera litura (Asian cotton leafworm) protein is Phenoloxidase-activating enzyme 1.